A 409-amino-acid polypeptide reads, in one-letter code: Accessory Sec system protein translocase subunit SecY2 (409 aa).

The next 10 helical transmembrane spans lie at 16 to 36 (ILIT…PIPG), 61 to 81 (LSQV…MILL), 104 to 124 (VVML…FQYH), 132 to 152 (LLLA…IGNL), 161 to 181 (MTIL…PLIF), 190 to 210 (LAII…ITFE), 242 to 262 (GMAF…IILL), 286 to 306 (GVVI…FVNI), 341 to 361 (LFGT…LLFA), and 374 to 394 (TGIF…FQVI).

Belongs to the SecY/SEC61-alpha family. SecY2 subfamily. In terms of assembly, component of the accessory SecA2/SecY2 protein translocase complex required to export cell wall proteins. May form heterotrimers with SecE and SecG subunits.

The protein localises to the cell membrane. Part of the accessory SecA2/SecY2 system specifically required for export of possible cell wall proteins. The central subunit of a protein translocation channel. This is Accessory Sec system protein translocase subunit SecY2 from Streptococcus agalactiae serotype III (strain NEM316).